The primary structure comprises 81 residues: Photosystem I iron-sulfur center (81 aa).

2 consecutive 4Fe-4S ferredoxin-type domains span residues 2 to 31 and 39 to 68; these read AHSV…MVPW and IASA…VRVY. Residues C11, C14, C17, C21, C48, C51, C54, and C58 each coordinate [4Fe-4S] cluster.

The eukaryotic PSI reaction center is composed of at least 11 subunits. Requires [4Fe-4S] cluster as cofactor.

Its subcellular location is the plastid. It is found in the chloroplast thylakoid membrane. It carries out the reaction reduced [plastocyanin] + hnu + oxidized [2Fe-2S]-[ferredoxin] = oxidized [plastocyanin] + reduced [2Fe-2S]-[ferredoxin]. Its function is as follows. Apoprotein for the two 4Fe-4S centers FA and FB of photosystem I (PSI); essential for photochemical activity. FB is the terminal electron acceptor of PSI, donating electrons to ferredoxin. The C-terminus interacts with PsaA/B/D and helps assemble the protein into the PSI complex. Required for binding of PsaD and PsaE to PSI. PSI is a plastocyanin-ferredoxin oxidoreductase, converting photonic excitation into a charge separation, which transfers an electron from the donor P700 chlorophyll pair to the spectroscopically characterized acceptors A0, A1, FX, FA and FB in turn. In Mesostigma viride (Green alga), this protein is Photosystem I iron-sulfur center.